We begin with the raw amino-acid sequence, 157 residues long: Pyruvoyl-dependent arginine decarboxylase 1 (157 aa).

S41 bears the Pyruvic acid (Ser) mark.

It belongs to the PdaD family. It depends on pyruvate as a cofactor.

The enzyme catalyses L-arginine + H(+) = agmatine + CO2. This chain is Pyruvoyl-dependent arginine decarboxylase 1 (pdaD1), found in Archaeoglobus fulgidus (strain ATCC 49558 / DSM 4304 / JCM 9628 / NBRC 100126 / VC-16).